The chain runs to 453 residues: Chromosomal replication initiator protein DnaA (453 aa).

The interval 1–73 is domain I, interacts with DnaA modulators; it reads MNISPQYLWN…AQEVASVVGY (73 aa). The segment at 73-112 is domain II; the sequence is YPVDIQLTTAEGETMAMTGEAQSYQEKSLTQIAPESPKLN. A domain III, AAA+ region region spans residues 113 to 329; it reads QLNPRYTFSR…GALIRAIAYT (217 aa). Gly-157, Gly-159, Lys-160, and Thr-161 together coordinate ATP. The interval 330–453 is domain IV, binds dsDNA; it reads SISGLSMTVQ…RINMASRTQS (124 aa).

The protein belongs to the DnaA family. As to quaternary structure, oligomerizes as a right-handed, spiral filament on DNA at oriC.

The protein localises to the cytoplasm. Its function is as follows. Plays an essential role in the initiation and regulation of chromosomal replication. ATP-DnaA binds to the origin of replication (oriC) to initiate formation of the DNA replication initiation complex once per cell cycle. Binds the DnaA box (a 9 base pair repeat at the origin) and separates the double-stranded (ds)DNA. Forms a right-handed helical filament on oriC DNA; dsDNA binds to the exterior of the filament while single-stranded (ss)DNA is stabiized in the filament's interior. The ATP-DnaA-oriC complex binds and stabilizes one strand of the AT-rich DNA unwinding element (DUE), permitting loading of DNA polymerase. After initiation quickly degrades to an ADP-DnaA complex that is not apt for DNA replication. Binds acidic phospholipids. The protein is Chromosomal replication initiator protein DnaA of Rippkaea orientalis (strain PCC 8801 / RF-1) (Cyanothece sp. (strain PCC 8801)).